Here is a 406-residue protein sequence, read N- to C-terminus: ATP phosphoribosyltransferase regulatory subunit (406 aa).

It belongs to the class-II aminoacyl-tRNA synthetase family. HisZ subfamily. Heteromultimer composed of HisG and HisZ subunits.

It is found in the cytoplasm. It participates in amino-acid biosynthesis; L-histidine biosynthesis; L-histidine from 5-phospho-alpha-D-ribose 1-diphosphate: step 1/9. Required for the first step of histidine biosynthesis. May allow the feedback regulation of ATP phosphoribosyltransferase activity by histidine. The sequence is that of ATP phosphoribosyltransferase regulatory subunit from Methylococcus capsulatus (strain ATCC 33009 / NCIMB 11132 / Bath).